Here is a 347-residue protein sequence, read N- to C-terminus: Quinolinate synthase (347 aa).

2 residues coordinate iminosuccinate: His-47 and Ser-68. Cys-113 contributes to the [4Fe-4S] cluster binding site. Iminosuccinate-binding positions include 139–141 (YAN) and Ser-156. Cys-200 serves as a coordination point for [4Fe-4S] cluster. Iminosuccinate contacts are provided by residues 226-228 (HPE) and Thr-243. Position 297 (Cys-297) interacts with [4Fe-4S] cluster.

This sequence belongs to the quinolinate synthase family. Type 1 subfamily. The cofactor is [4Fe-4S] cluster.

It localises to the cytoplasm. It catalyses the reaction iminosuccinate + dihydroxyacetone phosphate = quinolinate + phosphate + 2 H2O + H(+). The protein operates within cofactor biosynthesis; NAD(+) biosynthesis; quinolinate from iminoaspartate: step 1/1. In terms of biological role, catalyzes the condensation of iminoaspartate with dihydroxyacetone phosphate to form quinolinate. The protein is Quinolinate synthase of Shigella boydii serotype 18 (strain CDC 3083-94 / BS512).